We begin with the raw amino-acid sequence, 286 residues long: MKIRVPATSANLGPGFDSMGIAVSKYLEVDILEESEQWFIEHDLGDIPNDDSNLLIQTALRLAPNIPAHRLKMTSDIPLARGLGSSSSVIVAGIELANQLGHLNLTADRKLAIATRIEGHPDNVAPAIFGQLVIASQIGKDVDYIIAPFPDLSLVCFIPDYELKTSDSRDVLPKQLSYKQAVAASSVANLAIAALLTGNLKKAGRAIENDQFHEIYRQRLVREFQPIKRAAAANGAYATYLSGAGPAIMVMCPNEKKMAIYEAIEQLGLIGQLVSLELDRQGLCLV.

78–88 (PLARGLGSSSS) lines the ATP pocket.

Belongs to the GHMP kinase family. Homoserine kinase subfamily.

It is found in the cytoplasm. The catalysed reaction is L-homoserine + ATP = O-phospho-L-homoserine + ADP + H(+). It functions in the pathway amino-acid biosynthesis; L-threonine biosynthesis; L-threonine from L-aspartate: step 4/5. Functionally, catalyzes the ATP-dependent phosphorylation of L-homoserine to L-homoserine phosphate. The protein is Homoserine kinase of Streptococcus equi subsp. zooepidemicus (strain H70).